The following is a 396-amino-acid chain: Carbamoyl phosphate synthase small chain (396 aa).

The interval 1 to 204 (MTQHDNDPAW…WDKGFGQQDK (204 aa)) is CPSase. L-glutamine contacts are provided by serine 59, glycine 256, and glycine 258. The region spanning 208–396 (NVVAIDYGIK…AELMRQKKSA (189 aa)) is the Glutamine amidotransferase type-1 domain. The active-site Nucleophile is cysteine 285. L-glutamine contacts are provided by leucine 286, glutamine 289, asparagine 327, glycine 329, and phenylalanine 330. Active-site residues include histidine 369 and glutamate 371.

The protein belongs to the CarA family. In terms of assembly, composed of two chains; the small (or glutamine) chain promotes the hydrolysis of glutamine to ammonia, which is used by the large (or ammonia) chain to synthesize carbamoyl phosphate. Tetramer of heterodimers (alpha,beta)4.

The enzyme catalyses hydrogencarbonate + L-glutamine + 2 ATP + H2O = carbamoyl phosphate + L-glutamate + 2 ADP + phosphate + 2 H(+). It catalyses the reaction L-glutamine + H2O = L-glutamate + NH4(+). Its pathway is amino-acid biosynthesis; L-arginine biosynthesis; carbamoyl phosphate from bicarbonate: step 1/1. The protein operates within pyrimidine metabolism; UMP biosynthesis via de novo pathway; (S)-dihydroorotate from bicarbonate: step 1/3. In terms of biological role, small subunit of the glutamine-dependent carbamoyl phosphate synthetase (CPSase). CPSase catalyzes the formation of carbamoyl phosphate from the ammonia moiety of glutamine, carbonate, and phosphate donated by ATP, constituting the first step of 2 biosynthetic pathways, one leading to arginine and/or urea and the other to pyrimidine nucleotides. The small subunit (glutamine amidotransferase) binds and cleaves glutamine to supply the large subunit with the substrate ammonia. This Bradyrhizobium diazoefficiens (strain JCM 10833 / BCRC 13528 / IAM 13628 / NBRC 14792 / USDA 110) protein is Carbamoyl phosphate synthase small chain.